We begin with the raw amino-acid sequence, 424 residues long: Endo-beta-1,4-galactanase (424 aa).

A signal peptide spans 1 to 26 (MKNVLAVFVVLIFVLGAFGTSGPAEA). Residue 142-145 (DPAK) coordinates substrate. Catalysis depends on glutamate 190, which acts as the Proton donor. Residues 229 to 230 (TN) and histidine 263 each bind substrate. Residue glutamate 288 is the Nucleophile of the active site. Residue threonine 292 coordinates substrate. Ca(2+) contacts are provided by aspartate 297, aspartate 299, histidine 301, and asparagine 303. Residues lysine 307 and aspartate 384 each coordinate substrate. Ca(2+)-binding residues include serine 392 and aspartate 395.

This sequence belongs to the glycosyl hydrolase 53 family. Ca(2+) is required as a cofactor.

The enzyme catalyses The enzyme specifically hydrolyzes (1-&gt;4)-beta-D-galactosidic linkages in type I arabinogalactans.. In terms of biological role, involved in galactan degradation. Degrades arabinose-free galactan to galactooligosaccharides, producing galactotetraose as the main product along with galactotriose, galactobiose, and galactose. May hydrolyze the beta-1,4-galactan linkages of the galactan portion of arabinogalactan type I, a pectic plant polysaccharide from which most of the arabinose has been removed. The protein is Endo-beta-1,4-galactanase (ganB) of Bacillus licheniformis (strain ATCC 14580 / DSM 13 / JCM 2505 / CCUG 7422 / NBRC 12200 / NCIMB 9375 / NCTC 10341 / NRRL NRS-1264 / Gibson 46).